The following is a 189-amino-acid chain: GMP synthase [glutamine-hydrolyzing] subunit A (189 aa).

Residues 1 to 189 (MIVILNNGGQ…CKKCGFGFEE (189 aa)) enclose the Glutamine amidotransferase type-1 domain. Cys-76 functions as the Nucleophile in the catalytic mechanism. Catalysis depends on residues His-163 and Glu-165.

As to quaternary structure, heterodimer composed of a glutamine amidotransferase subunit (A) and a GMP-binding subunit (B).

The enzyme catalyses XMP + L-glutamine + ATP + H2O = GMP + L-glutamate + AMP + diphosphate + 2 H(+). It functions in the pathway purine metabolism; GMP biosynthesis; GMP from XMP (L-Gln route): step 1/1. Catalyzes the synthesis of GMP from XMP. The sequence is that of GMP synthase [glutamine-hydrolyzing] subunit A from Methanococcus maripaludis (strain DSM 14266 / JCM 13030 / NBRC 101832 / S2 / LL).